We begin with the raw amino-acid sequence, 622 residues long: Prothrombin (622 aa).

A signal peptide spans 1–24 (MAHVRGLQLPGCLALAALCSLVHS). Positions 25-43 (QHVFLAPQQARSLLQRVRR) are excised as a propeptide. The Gla domain occupies 44–89 (ANTFLEEVRKGNLERECVEETCSYEEAFEALESSTATDVFWAKYTA). 10 positions are modified to 4-carboxyglutamate: Glu-49, Glu-50, Glu-57, Glu-59, Glu-62, Glu-63, Glu-68, Glu-69, Glu-72, and Glu-75. The cysteines at positions 60 and 65 are disulfide-linked. Cystine bridges form between Cys-90–Cys-103, Cys-108–Cys-186, Cys-129–Cys-169, Cys-157–Cys-181, Cys-213–Cys-291, Cys-234–Cys-274, Cys-262–Cys-286, Cys-336–Cys-482, Cys-391–Cys-407, Cys-536–Cys-550, and Cys-564–Cys-594. Kringle domains lie at 108-186 (CAEG…IPVC) and 213-291 (CVPD…LNYC). N-linked (GlcNAc...) (complex) asparagine glycosylation is found at Asn-121 and Asn-143. Residues 364–618 (IVEGSDAEIG…LKKWIQKVID (255 aa)) enclose the Peptidase S1 domain. The active-site Charge relay system is His-406. An N-linked (GlcNAc...) (complex) asparagine glycan is attached at Asn-416. Residue Asp-462 is the Charge relay system of the active site. The high affinity receptor-binding region which is also known as the TP508 peptide stretch occupies residues 551–573 (AGYKPDEGKRGDACEGDSGGPFV). Catalysis depends on Ser-568, which acts as the Charge relay system.

The protein belongs to the peptidase S1 family. Heterodimer (named alpha-thrombin) of a light and a heavy chain; disulfide-linked. Forms a heterodimer with SERPINA5. In plasma, interacts (via N-terminus) with alpha-1-microglobulin with molar ratio 1:2 and 1:1; this interaction does not prevent the activation of prothrombin to thrombin. Interacts (thrombin) with iripin-8, a serine protease inhibitor from Ixodes ricinus saliva. Interacts (thrombin) with iripin-3, a serine protease inhibitor from Ixodes ricinus saliva. Interacts (thrombin) with Anopheles albimanus salivary thrombin inhibitor anophelin; the interaction results in thrombin inhibition. Interacts (thrombin) with Anopheles gambiae salivary thrombin inhibitor anophelin; the interaction results in thrombin inhibition. Interacts (thrombin) with Amblyomma variegatum variegin; the interaction results in thrombin inhibition. Interacts (thrombin) with Xenopsylla cheopis salivary thrombin inhibitor XC-42. Interacts (thrombin) with Xenopsylla cheopis salivary thrombin inhibitor XC-43. Post-translationally, the gamma-carboxyglutamyl residues, which bind calcium ions, result from the carboxylation of glutamyl residues by a microsomal enzyme, the vitamin K-dependent carboxylase. The modified residues are necessary for the calcium-dependent interaction with a negatively charged phospholipid surface, which is essential for the conversion of prothrombin to thrombin. In terms of processing, N-glycosylated. N-glycan heterogeneity at Asn-121: Hex3HexNAc3 (minor), Hex4HexNAc3 (minor) and Hex5HexNAc4 (major). At Asn-143: Hex4HexNAc3 (minor) and Hex5HexNAc4 (major). In the penultimate step of the coagulation cascade, prothrombin is converted to thrombin by the prothrombinase complex composed of factor Xa (F10), cofactor Va (F5), and phospholipids. This activation requires factor Xa-catalyzed sequential cleavage at 2 sites, Arg-314 and Arg-363, along 2 possible pathways. In the first pathway, the first cleavage occurs at Arg-314, leading to the formation of the inactive intermediate prethrombin-2. This pathway preferentially occurs on platelets and in the absence of cofactor Va. In the second pathway, the first cleavage occurs at Arg-363, which separates protease domain into 2 chains that remain connected through a disulfide bond and generates the active intermediate meizothrombin. The presence of cofactor Va directs activation along the meizothrombin pathway and greatly accelerates the rate of cleavage at Arg-363, but has a smaller effect on the cleavage of meizothrombin at Arg-314. Meizothrombin accumulates as an intermediate when prothrombinase is assembled on the membrane of red blood cells. As to expression, expressed by the liver and secreted in plasma.

The protein localises to the secreted. It is found in the extracellular space. It carries out the reaction Selective cleavage of Arg-|-Gly bonds in fibrinogen to form fibrin and release fibrinopeptides A and B.. Its activity is regulated as follows. Activity is promoted in the presence of negatively charged surfaces, such as polyphosphate and dextran sulfate. Inhibited by SERPINA5. Functionally, thrombin, which cleaves bonds after Arg and Lys, converts fibrinogen to fibrin and activates factors V, VII, VIII, XIII, and, in complex with thrombomodulin, protein C. Functions in blood homeostasis, inflammation and wound healing. Activates coagulation factor XI (F11); activation is promoted by the contact with negatively charged surfaces. Triggers the production of pro-inflammatory cytokines, such as MCP-1/CCL2 and IL8/CXCL8, in endothelial cells. This Homo sapiens (Human) protein is Prothrombin (F2).